Here is a 233-residue protein sequence, read N- to C-terminus: Ribosome maturation factor RimM (233 aa).

Residues Met-1–Glu-51 are disordered. A compositionally biased stretch (gly residues) spans Gly-11 to Gly-28. The PRC barrel domain maps to Gly-145–Leu-226.

It belongs to the RimM family. Binds ribosomal protein uS19.

The protein localises to the cytoplasm. Functionally, an accessory protein needed during the final step in the assembly of 30S ribosomal subunit, possibly for assembly of the head region. Essential for efficient processing of 16S rRNA. May be needed both before and after RbfA during the maturation of 16S rRNA. It has affinity for free ribosomal 30S subunits but not for 70S ribosomes. In Trichormus variabilis (strain ATCC 29413 / PCC 7937) (Anabaena variabilis), this protein is Ribosome maturation factor RimM.